Reading from the N-terminus, the 214-residue chain is Histidine biosynthesis bifunctional protein HisIE (214 aa).

The interval 1–125 (MPATALSLPL…ESIEPPPADT (125 aa)) is phosphoribosyl-AMP cyclohydrolase. A phosphoribosyl-ATP pyrophosphohydrolase region spans residues 126–214 (LSQVYNIVCQ…VYEQLQLRRR (89 aa)).

It in the N-terminal section; belongs to the PRA-CH family. In the C-terminal section; belongs to the PRA-PH family.

Its subcellular location is the cytoplasm. The enzyme catalyses 1-(5-phospho-beta-D-ribosyl)-ATP + H2O = 1-(5-phospho-beta-D-ribosyl)-5'-AMP + diphosphate + H(+). It catalyses the reaction 1-(5-phospho-beta-D-ribosyl)-5'-AMP + H2O = 1-(5-phospho-beta-D-ribosyl)-5-[(5-phospho-beta-D-ribosylamino)methylideneamino]imidazole-4-carboxamide. Its pathway is amino-acid biosynthesis; L-histidine biosynthesis; L-histidine from 5-phospho-alpha-D-ribose 1-diphosphate: step 2/9. It participates in amino-acid biosynthesis; L-histidine biosynthesis; L-histidine from 5-phospho-alpha-D-ribose 1-diphosphate: step 3/9. The sequence is that of Histidine biosynthesis bifunctional protein HisIE from Thermosynechococcus vestitus (strain NIES-2133 / IAM M-273 / BP-1).